The sequence spans 286 residues: ATP synthase gamma chain (286 aa).

The protein belongs to the ATPase gamma chain family. In terms of assembly, F-type ATPases have 2 components, CF(1) - the catalytic core - and CF(0) - the membrane proton channel. CF(1) has five subunits: alpha(3), beta(3), gamma(1), delta(1), epsilon(1). CF(0) has three main subunits: a, b and c.

It localises to the cell inner membrane. In terms of biological role, produces ATP from ADP in the presence of a proton gradient across the membrane. The gamma chain is believed to be important in regulating ATPase activity and the flow of protons through the CF(0) complex. This Shewanella piezotolerans (strain WP3 / JCM 13877) protein is ATP synthase gamma chain.